The primary structure comprises 218 residues: Sodium channel regulatory subunit beta-1 (218 aa).

An N-terminal signal peptide occupies residues 1–18 (MGTLLALVVGAVLVSSAW). Topologically, residues 19–157 (GGCVEVDSET…DKANRDMASI (139 aa)) are extracellular. Intrachain disulfides connect cysteine 21–cysteine 43 and cysteine 40–cysteine 121. Residues 22–150 (VEVDSETEAV…KIHLEVVDKA (129 aa)) enclose the Ig-like C2-type domain. Asparagine 93, asparagine 110, asparagine 114, and asparagine 135 each carry an N-linked (GlcNAc...) asparagine glycan. Residues 158 to 179 (VSEIMMYVLIVVLTIWLVAEMV) form a helical membrane-spanning segment. Over 180 to 218 (YCYKKIAAATEAAAQENASEYLAITSESKENCTGVQVAE) the chain is Cytoplasmic.

This sequence belongs to the sodium channel auxiliary subunit SCN1B (TC 8.A.17) family. A voltage-gated sodium (Nav) channel consists of an ion-conducting pore-forming alpha subunit functional on its own that is regulated by one or more beta subunits. Interacts with SCN1A; regulatory subunit of SCN1A/Nav1.1. Interacts with SCN3A; regulatory subunit of SCN3A/Nav1.3. Interacts with SCN4A; regulatory subunit of SCN4A/Nav1.4. Interacts with SCN5A; regulatory subunit of SCN5A/Nav1.5. Interacts with SCN8A; regulatory subunit of SCN8A/Nav1.6. Interacts with SCN9A; regulatory subunit of SCN9A/Nav1.7. Interacts with SCN10A; regulatory subunit of SCN10A/Nav1.8. Interacts with NFASC. Interacts with TMEM65. In terms of tissue distribution, detected in brain (at protein level). Expressed in brain, heart, skeletal muscle and spinal cord.

Its subcellular location is the cell membrane. It is found in the perikaryon. It localises to the cell projection. The protein localises to the axon. Regulatory subunit of multiple voltage-gated sodium (Nav) channels directly mediating the depolarization of excitable membranes. Navs, also called VGSCs (voltage-gated sodium channels) or VDSCs (voltage-dependent sodium channels), operate by switching between closed and open conformations depending on the voltage difference across the membrane. In the open conformation they allow Na(+) ions to selectively pass through the pore, along their electrochemical gradient. The influx of Na+ ions provokes membrane depolarization, initiating the propagation of electrical signals throughout cells and tissues. The accessory beta subunits participate in localization and functional modulation of the Nav channels. Modulates the activity of SCN1A/Nav1.1, SCN2A/Nav1.2, SCN3A/Nav1.3, SCN4A/Nav1.4, SCN5A/Nav1.5, SCN8A/Nav1.6, SCN9A/Nav1.7 and SCN10A/Nav1.8. The sequence is that of Sodium channel regulatory subunit beta-1 from Rattus norvegicus (Rat).